A 343-amino-acid polypeptide reads, in one-letter code: Tetraacyldisaccharide 4'-kinase (343 aa).

Residue 61 to 68 (GVGGNGKT) coordinates ATP.

It belongs to the LpxK family.

It carries out the reaction a lipid A disaccharide + ATP = a lipid IVA + ADP + H(+). The protein operates within glycolipid biosynthesis; lipid IV(A) biosynthesis; lipid IV(A) from (3R)-3-hydroxytetradecanoyl-[acyl-carrier-protein] and UDP-N-acetyl-alpha-D-glucosamine: step 6/6. Its function is as follows. Transfers the gamma-phosphate of ATP to the 4'-position of a tetraacyldisaccharide 1-phosphate intermediate (termed DS-1-P) to form tetraacyldisaccharide 1,4'-bis-phosphate (lipid IVA). The polypeptide is Tetraacyldisaccharide 4'-kinase (Colwellia psychrerythraea (strain 34H / ATCC BAA-681) (Vibrio psychroerythus)).